The sequence spans 730 residues: Protein groucho (730 aa).

Positions 144–411 are disordered; sequence QVPGGPPQPM…GKPAYSFHMN (268 aa). The span at 198–233 shows a compositional bias: basic and acidic residues; the sequence is AEERLRNSVSPADREKYRTRSPLDIENDSKRRKDEK. A phosphoserine mark is found at Ser-205, Ser-207, and Ser-218. The tract at residues 206–267 is CCN domain; it reads VSPADREKYR…SPRPNGEHVS (62 aa). The Nuclear localization signal motif lies at 227 to 230; it reads KRRK. Ser-242 is subject to Phosphoserine; by CK2. Positions 254 to 283 are enriched in basic and acidic residues; the sequence is MESHSPRPNGEHVSMEVRDRESLNGERLEK. Ser-258 is modified (phosphoserine; by CDC2). The interval 262–425 is binding to basic helix-loop-helix domain; it reads NGEHVSMEVR…LQPVPFPPDA (164 aa). Position 267 is a phosphoserine (Ser-267). 3 stretches are compositionally biased toward low complexity: residues 296 to 308, 322 to 345, and 353 to 362; these read SRSG…STPS, AKAR…QMMP, and YPGAPYQRPA. Thr-326 and Thr-328 each carry phosphothreonine. The segment covering 366 to 382 has biased composition (pro residues); sequence QRPPSDPAYGRPPPMPY. 7 WD repeats span residues 442–480, 488–527, 532–571, 574–613, 615–654, 656–695, and 697–730; these read SHGE…NKNP, QRDN…PRIK, SAAP…LVRQ, GHTD…QLQQ, DFSS…KYQL, LHES…SIFQ, and KETS…EVIY.

It belongs to the WD repeat Groucho/TLE family. Forms a complex with the hairy/Enhancer of split/deadpan family of basic helix-loop-helix proteins in order to repress transcription. Its activity in regulating transcription depends on other proteins as it lacks a DNA-binding motif. Interacts with hairy/hry (via WRPW motif). In terms of processing, ubiquitinated by XIAP/BIRC4. Ubiquitinated by hyd in response to Wnt signaling, leading to degradation by the proteasome.

It localises to the nucleus. Its function is as follows. Transcriptional corepressor that regulates transcription when recruited to specific target DNA by hairy-related bHLH proteins. Maternally required for neurogenesis; in the segregation of the neuroectoderm. Directly or indirectly interacts with Notch and Delta. The chain is Protein groucho (gro) from Drosophila melanogaster (Fruit fly).